Consider the following 545-residue polypeptide: MTKFIFVTGGVVSSIGKGIVAASLGRLLKSRDYSVSILKLDPYINIDPGTMSPFQHGEVFVTQDGAETDLDLGHYERFTDTSMSRLNSVTTGSIYQAVIMRERRGDYNGGTVQVIPHITNEIKERILSVAKETNPSVVITEIGGTVGDIESLPFLEAIRQLRKQVGRQNVLYMHVTLMPYIASAGEMKTKPTQHSVKELRSIGIQPDILVCRSDRPIPRGLKQKLSEFCDVPVECVITSQDARSIYEVPLILEGEGLAEQTLKLLQMEQRQPNLEKWQAMVQGLYSPKHTVEIAIVGKYVSLGDAYLSVVEALRHAAIATQGDLQLRWINSEDLETQAPETYLAGVDGIVVPGGFGTRGVDGKIAAIKYARDRQIPFLGLCLGMQCSVIEWARNVGGLAGANSAEFDSTTKYPVINLLPEQQDVVDLGGTMRLGVYPCHILPNTLASKLYQAEIIQERHRHRYEFNNDYRQLLLDSGYVISGTSPDGRLVEIVEYPQHPFFISCQFHPEFQSRPNTPHPLFTGFVQAAIAQSHPTANFQTPVKVS.

Residues 1–267 (MTKFIFVTGG…AEQTLKLLQM (267 aa)) are amidoligase domain. Ser13 serves as a coordination point for CTP. Ser13 serves as a coordination point for UTP. ATP-binding positions include 14–19 (SIGKGI) and Asp71. Residues Asp71 and Glu141 each contribute to the Mg(2+) site. CTP is bound by residues 148-150 (DIE), 188-193 (KTKPTQ), and Lys224. UTP is bound by residues 188-193 (KTKPTQ) and Lys224. The 243-residue stretch at 292 to 534 (EIAIVGKYVS…VQAAIAQSHP (243 aa)) folds into the Glutamine amidotransferase type-1 domain. Position 354 (Gly354) interacts with L-glutamine. The active-site Nucleophile; for glutamine hydrolysis is the Cys381. Residues 382 to 385 (LGMQ), Glu405, and Arg462 each bind L-glutamine. Active-site residues include His507 and Glu509.

The protein belongs to the CTP synthase family. As to quaternary structure, homotetramer.

The catalysed reaction is UTP + L-glutamine + ATP + H2O = CTP + L-glutamate + ADP + phosphate + 2 H(+). It catalyses the reaction L-glutamine + H2O = L-glutamate + NH4(+). The enzyme catalyses UTP + NH4(+) + ATP = CTP + ADP + phosphate + 2 H(+). The protein operates within pyrimidine metabolism; CTP biosynthesis via de novo pathway; CTP from UDP: step 2/2. Allosterically activated by GTP, when glutamine is the substrate; GTP has no effect on the reaction when ammonia is the substrate. The allosteric effector GTP functions by stabilizing the protein conformation that binds the tetrahedral intermediate(s) formed during glutamine hydrolysis. Inhibited by the product CTP, via allosteric rather than competitive inhibition. Catalyzes the ATP-dependent amination of UTP to CTP with either L-glutamine or ammonia as the source of nitrogen. Regulates intracellular CTP levels through interactions with the four ribonucleotide triphosphates. This chain is CTP synthase, found in Trichormus variabilis (strain ATCC 29413 / PCC 7937) (Anabaena variabilis).